Consider the following 72-residue polypeptide: Cell division protein ZapB (72 aa).

Positions 5–71 (ILDQLEEKIK…LRSLLGQIDN (67 aa)) form a coiled coil.

The protein belongs to the ZapB family. As to quaternary structure, homodimer. The ends of the coiled-coil dimer bind to each other, forming polymers. Interacts with FtsZ.

It is found in the cytoplasm. In terms of biological role, non-essential, abundant cell division factor that is required for proper Z-ring formation. It is recruited early to the divisome by direct interaction with FtsZ, stimulating Z-ring assembly and thereby promoting cell division earlier in the cell cycle. Its recruitment to the Z-ring requires functional FtsA or ZipA. The chain is Cell division protein ZapB from Actinobacillus pleuropneumoniae serotype 5b (strain L20).